Here is a 338-residue protein sequence, read N- to C-terminus: MKRLALALKQKKVASWKLEEVKELTELIKNSNTILIGSLEGFPADKLHEIRKKLRGKAIIKVTKNTLFKIAAKNAGISTEKLEQYLTGPNVFIFTKDNPFLTNMFFENYKLRRYAMPGDKAEEEVIIPAGDTGMPAGPILSVFGKLKVQTKVQDGKVHVVKDTVVAKPGDVIPTEALPILQKLGIMPVYVKLKIKVAYHEGLVIPAENLKLNLEGYRSNIAEAYRNAFTLAVEIAYPVPDVLKFTINKIFKNAITLASEIGYLTPESAQAVISKAVAKAYALATAISGKVDLGVKLPSAQQTQTQQSTAEEKKEEKKEEEKKGPSEEEIGSGLASLFG.

Residues 297-338 (PSAQQTQTQQSTAEEKKEEKKEEEKKGPSEEEIGSGLASLFG) are disordered. The segment covering 298–308 (SAQQTQTQQST) has biased composition (low complexity). Residues 309 to 325 (AEEKKEEKKEEEKKGPS) show a composition bias toward basic and acidic residues.

This sequence belongs to the universal ribosomal protein uL10 family. In terms of assembly, part of the 50S ribosomal subunit. Forms part of the ribosomal stalk which helps the ribosome interact with GTP-bound translation factors. Forms a heptameric L10(L12)2(L12)2(L12)2 complex, where L10 forms an elongated spine to which the L12 dimers bind in a sequential fashion.

Forms part of the ribosomal stalk, playing a central role in the interaction of the ribosome with GTP-bound translation factors. This Saccharolobus islandicus (strain Y.N.15.51 / Yellowstone #2) (Sulfolobus islandicus) protein is Large ribosomal subunit protein uL10.